A 310-amino-acid chain; its full sequence is tRNA dimethylallyltransferase 2 (310 aa).

15–22 is an ATP binding site; sequence GPTASGKT. 17–22 lines the substrate pocket; sequence TASGKT. The segment at 40–43 is interaction with substrate tRNA; sequence DSMQ.

It belongs to the IPP transferase family. As to quaternary structure, monomer. The cofactor is Mg(2+).

The enzyme catalyses adenosine(37) in tRNA + dimethylallyl diphosphate = N(6)-dimethylallyladenosine(37) in tRNA + diphosphate. Catalyzes the transfer of a dimethylallyl group onto the adenine at position 37 in tRNAs that read codons beginning with uridine, leading to the formation of N6-(dimethylallyl)adenosine (i(6)A). The polypeptide is tRNA dimethylallyltransferase 2 (Geotalea uraniireducens (strain Rf4) (Geobacter uraniireducens)).